Consider the following 112-residue polypeptide: Small ribosomal subunit protein bS6 (112 aa).

It belongs to the bacterial ribosomal protein bS6 family.

Binds together with bS18 to 16S ribosomal RNA. This is Small ribosomal subunit protein bS6 from Chlamydia abortus (strain DSM 27085 / S26/3) (Chlamydophila abortus).